Consider the following 662-residue polypeptide: Probable quinol oxidase subunit 1 (662 aa).

Helical transmembrane passes span 14 to 34 (WMII…IAVI) and 56 to 76 (IGIM…IDAL). H102 is a Fe(II)-heme a binding site. The next 8 membrane-spanning stretches (helical) occupy residues 103-123 (GVIM…NVVI), 140-160 (VSFW…IVGG), 187-207 (IAIQ…FVTI), 228-248 (FITT…LALM), 273-293 (FFWV…FGMY), 311-331 (MIWA…HHFF), 336-356 (GALI…PTGV), and 376-396 (MLFS…GVML). Cu cation is bound by residues H279, Y283, H328, and H329. Residues 279–283 (HPEVY) constitute a cross-link (1'-histidyl-3'-tyrosine (His-Tyr)). H414 is a heme a3 binding site. 5 helical membrane passes run 415-435 (FHYT…IFWY), 451-471 (CFWF…ILGL), 492-512 (FIST…VASI), 587-604 (PVGF…FFLI), and 608-627 (IVPA…WRSF). H416 serves as a coordination point for Fe(II)-heme a.

The protein belongs to the heme-copper respiratory oxidase family. The cofactor is Cu cation. Ferriheme a serves as cofactor. Requires Heme A3. as cofactor.

It localises to the cell membrane. The catalysed reaction is 2 a quinol + O2 = 2 a quinone + 2 H2O. It functions in the pathway energy metabolism; oxidative phosphorylation. Its function is as follows. Catalyzes quinol oxidation with the concomitant reduction of oxygen to water. In Staphylococcus epidermidis (strain ATCC 35984 / DSM 28319 / BCRC 17069 / CCUG 31568 / BM 3577 / RP62A), this protein is Probable quinol oxidase subunit 1 (qoxB).